Reading from the N-terminus, the 287-residue chain is Undecaprenyl-diphosphatase (287 aa).

6 helical membrane passes run 50–70 (PGVSVTAAIQLGSIVAVIAYF), 99–119 (IAMAVGTLPILAVGLAIKLFW), 128–148 (LRSVPSIAVVSIVMALLLAVA), 206–226 (FLLGIPAITIAGIVELKDALA), 231–251 (AGPLPLVIGILAATVVSWLAI), and 263–283 (TWLFVAYRLLFGVGLLAWWSI).

This sequence belongs to the UppP family.

The protein resides in the cell inner membrane. The catalysed reaction is di-trans,octa-cis-undecaprenyl diphosphate + H2O = di-trans,octa-cis-undecaprenyl phosphate + phosphate + H(+). Its function is as follows. Catalyzes the dephosphorylation of undecaprenyl diphosphate (UPP). Confers resistance to bacitracin. The sequence is that of Undecaprenyl-diphosphatase from Parasynechococcus marenigrum (strain WH8102).